We begin with the raw amino-acid sequence, 596 residues long: Protein kinase C iota type (596 aa).

Residues 1–12 (MPTQRDSSTMSH) show a composition bias toward polar residues. A disordered region spans residues 1–21 (MPTQRDSSTMSHTVACGGGGD). P2 bears the N-acetylproline mark. Residues 2 to 28 (PTQRDSSTMSHTVACGGGGDHSHQVRV) form a required for interaction with RAB2 region. Positions 2–253 (PTQRDSSTMS…KASSSLGLQD (252 aa)) are regulatory domain. T3 carries the phosphothreonine modification. Residues S7 and S8 each carry the phosphoserine modification. T9 carries the phosphothreonine modification. A PB1 domain is found at 25 to 108 (QVRVKAYYRG…SELLIHVFPC (84 aa)). The interaction with PARD6A stretch occupies residues 72–91 (DEEGDPCTVSSQLELEEAFR). The Pseudosubstrate signature appears at 125–134 (YRRGARRWRK). The segment at 140–190 (GHTFQAKRFNRRAHCAICTDRIWGLGRQGYKCINCKLLVHKKCHKLVTIEC) adopts a Phorbol-ester/DAG-type zinc-finger fold. The region spanning 254 to 522 (FDLLRVIGRG…FADIQGHPFF (269 aa)) is the Protein kinase domain. 260–268 (IGRGSYAKV) is an ATP binding site. Residues Y265 and Y280 each carry the phosphotyrosine; by SRC modification. K283 is an ATP binding site. Y334 bears the Phosphotyrosine; by SRC mark. The active-site Proton acceptor is the D378. At T412 the chain carries Phosphothreonine; by PDPK1. The region spanning 523 to 594 (RNVDWDMMEQ…INPLLMSAEE (72 aa)) is the AGC-kinase C-terminal domain. Position 564 is a phosphothreonine (T564).

It belongs to the protein kinase superfamily. AGC Ser/Thr protein kinase family. PKC subfamily. In terms of assembly, forms a complex with SQSTM1 and MP2K5. Interacts directly with SQSTM1. Interacts with IKBKB. Interacts with PARD6A, PARD6B and PARD6G. Part of a quaternary complex containing aPKC, PARD3, a PARD6 protein (PARD6A, PARD6B or PARD6G) and a GTPase protein (CDC42 or RAC1). Part of a complex with LLGL1 and PARD6B. Interacts with ADAP1/CENTA1. Interaction with SMG1, through the ZN-finger domain, activates the kinase activity. Interacts with CDK7. Forms a complex with RAB2A and GAPDH involved in recruitment onto the membrane of vesicular tubular clusters (VTCs). Interacts with ECT2 ('Thr-359' phosphorylated form). Interacts with VAMP2. Interacts with WDFY2 (via WD repeats 1-3). Post-translationally, phosphorylation at Thr-412 in the activation loop is not mandatory for activation. Upon neuronal growth factor (NGF) stimulation, phosphorylated by SRC at Tyr-265, Tyr-280 and Tyr-334. Phosphorylation at Tyr-265 facilitates binding to KPNB1/importin-beta regulating entry of PRKCI into the nucleus. Phosphorylation on Tyr-334 is important for NF-kappa-B stimulation. Phosphorylated at Thr-564 during the initial phase of long term potentiation. In terms of tissue distribution, expressed in dorsal hippocampus (at protein level).

The protein resides in the cytoplasm. The protein localises to the membrane. It is found in the endosome. It localises to the nucleus. The enzyme catalyses L-seryl-[protein] + ATP = O-phospho-L-seryl-[protein] + ADP + H(+). It carries out the reaction L-threonyl-[protein] + ATP = O-phospho-L-threonyl-[protein] + ADP + H(+). With respect to regulation, atypical PKCs (PRKCI and PRKCZ) exhibit an elevated basal enzymatic activity (that may be due to the interaction with SMG1 or SQSTM1) and are not regulated by diacylglycerol, phosphatidylserine, phorbol esters or calcium ions. Two specific sites, Thr-412 (activation loop of the kinase domain) and Thr-564 (turn motif), need to be phosphorylated for its full activation. Might also be a target for novel lipid activators that are elevated during nutrient-stimulated insulin secretion. Calcium- and diacylglycerol-independent serine/ threonine-protein kinase that plays a general protective role against apoptotic stimuli, is involved in NF-kappa-B activation, cell survival, differentiation and polarity, and contributes to the regulation of microtubule dynamics in the early secretory pathway. Is necessary for BCR-ABL oncogene-mediated resistance to apoptotic drug in leukemia cells, protecting leukemia cells against drug-induced apoptosis. In cultured neurons, prevents amyloid beta protein-induced apoptosis by interrupting cell death process at a very early step. In glioblastoma cells, may function downstream of phosphatidylinositol 3-kinase (PI3K) and PDPK1 in the promotion of cell survival by phosphorylating and inhibiting the pro-apoptotic factor BAD. Can form a protein complex in non-small cell lung cancer (NSCLC) cells with PARD6A and ECT2 and regulate ECT2 oncogenic activity by phosphorylation, which in turn promotes transformed growth and invasion. In response to nerve growth factor (NGF), acts downstream of SRC to phosphorylate and activate IRAK1, allowing the subsequent activation of NF-kappa-B and neuronal cell survival. Functions in the organization of the apical domain in epithelial cells by phosphorylating EZR. This step is crucial for activation and normal distribution of EZR at the early stages of intestinal epithelial cell differentiation. Forms a protein complex with LLGL1 and PARD6B independently of PARD3 to regulate epithelial cell polarity. Plays a role in microtubule dynamics in the early secretory pathway through interaction with RAB2A and GAPDH and recruitment to vesicular tubular clusters (VTCs). In human coronary artery endothelial cells (HCAEC), is activated by saturated fatty acids and mediates lipid-induced apoptosis. Downstream of PI3K is required for insulin-stimulated glucose transport. Activates RAB4A and promotes its association with KIF3A which is required for the insulin-induced SLC2A4/GLUT4 translocation in adipocytes. Is essential in early embryogenesis and development of differentiating photoreceptors by playing a role in the establishment of epithelial and neuronal polarity. Involved in early synaptic long term potentiation phase in CA1 hippocampal cells and short term memory formation. The polypeptide is Protein kinase C iota type (Prkci) (Rattus norvegicus (Rat)).